A 573-amino-acid chain; its full sequence is MLO-like protein 2 (573 aa).

Residues 1 to 15 are Extracellular-facing; the sequence is MADQVKERTLEETST. Residues 16–36 traverse the membrane as a helical segment; it reads WAVAVVCFVLLFISIVLEHSI. Over 37–61 the chain is Cytoplasmic; the sequence is HKIGTWFKKKHKQALFEALEKVKAE. A helical membrane pass occupies residues 62-82; that stretch reads LMLLGFISLLLTIGQTPISNI. Over 83 to 164 the chain is Extracellular; it reads CISQKVASTM…VSAYGIHQLH (82 aa). Residues 165–185 traverse the membrane as a helical segment; sequence IFIFVLAVVHVVYCIVTYAFG. Topologically, residues 186 to 287 are cytoplasmic; the sequence is KIKMRTWKSW…KYIQRSLEKD (102 aa). Residues 288 to 308 traverse the membrane as a helical segment; the sequence is FKTVVEISPVIWFVAVLFLLT. At 309 to 317 the chain is on the extracellular side; it reads NSYGLRSYL. A helical transmembrane segment spans residues 318–338; it reads WLPFIPLVVILIVGTKLEVII. Topologically, residues 339–371 are cytoplasmic; it reads TKLGLRIQEKGDVVRGAPVVQPGDDLFWFGKPR. A helical membrane pass occupies residues 372 to 392; that stretch reads FILFLIHLVLFTNAFQLAFFA. Residues 393-415 are Extracellular-facing; it reads WSTYEFNLNNCFHESTADVVIRL. A helical transmembrane segment spans residues 416–436; it reads VVGAVVQILCSYVTLPLYALV. Residues 437–573 lie on the Cytoplasmic side of the membrane; sequence TQMGSKMKPT…KSLRDFSFKK (137 aa). Residues 450 to 471 form a calmodulin-binding region; it reads DRVATALKKWHHTAKNETKHGR. The interval 462 to 573 is disordered; the sequence is TAKNETKHGR…KSLRDFSFKK (112 aa). Composition is skewed to polar residues over residues 473–490 and 498–513; these read SGSN…THGS and NFNN…SPSP. Ser512 is subject to Phosphoserine. Basic and acidic residues predominate over residues 522–548; that stretch reads EHQFWDPESQHQEAETSTHHSLAHESS.

Belongs to the MLO family.

Its subcellular location is the membrane. Functionally, may be involved in modulation of pathogen defense and leaf cell death. Activity seems to be regulated by Ca(2+)-dependent calmodulin binding and seems not to require heterotrimeric G proteins. The sequence is that of MLO-like protein 2 (MLO2) from Arabidopsis thaliana (Mouse-ear cress).